The primary structure comprises 1104 residues: MERSPGEGPSPSPTDQPSAPSDPTGQPPAAHAKPDPGSGGQPAGPGAAGEALAVLTSFGKRLLVLIPVYLAGAVGLSVGFVLFGLALYLGWRRVRDEKERSLRAARQLLDDEEQLTAKTLYMSHRELPAWVSFPDVEKAEWLNKIVAQVWPFLGQYMEKLLAETVAPAVRGSNPHLQTFTFTRVELGEKPLRIIGVKVHPGQRKEQILLDLNISYVGDVQIDVEVKKYFCKAGVKGMQLHGVLRVILEPLIGDLPIVGAVSMFFIRRPTLDINWTGMTNLLDIPGLSSLSDTMIMDSIAAFLVLPNRLLVPLVPDLQDVAQLRSPLPRGIIRIHLLAARGLTSKDKYVKGLIEGKSDPYALVRLGTQTFCSRVIDEELNPQWGETYEVMVHEVPGQEIEVEVFDKDPDKDDFLGRMKLDVGKVLQAGVLDDWFPLQGGQGQVHLRLEWLSLLSDAEKLEQVLQWNQGVSSRPEPPSAAILVVYLDRAQDLPLKKGNKEPNPMVQLSIQDVTQESKAVYSTNCPVWEEAFRFFLQDPQSQELDVQVKDDSRALTLGALTLPLARLLTAPELILDQWFQLSSSGPNSRLYMKLVMRILYLDSSEICFPTVPGCPGAWDVDSENPQRGSSVDAPPRPCHTTPDSQFGTEHVLRIHVLEAQDLIAKDRFLGGLVKGKSDPYVKLKLAGRSFRSHVVREDLNPRWNEVFEVIVTSVPGQELEVEVFDKDLDKDDFLGRCKVSLTTVLNSGFLDEWLTLEDVPSGRLHLRLERLTPRPTAAELEEVLQVNSLIQTQKSAELAAALLSIYMERAEDLPLRKGTKHPSPYATLTVGDTSHKTKTVSQTSAPVWDESASFLIRKPHTENLELQVRGEGTGVLGSLSLPLSELLVADQLCLDRWFTLNSGQGQVLLRAQLGILVSQHSGVEAHSHSYSHSSSSLSEEPELSGGPPHVTSSAPELRQRLTHVDSSLEAPAGPLGQVKLTVWYYSEERKLVSIVHGCRALRQNGRDPPDPYVSLLLLPDKNRGTKRKTSQKKRTLSPEFNERFEWELPLDEAQRRKLDVSVKSNPSFMSRERELLGKVQLDLAETDLSQGVARWYDLMDDKDKGSS.

Methionine 1 is modified (N-acetylmethionine). Topologically, residues 1 to 38 (MERSPGEGPSPSPTDQPSAPSDPTGQPPAAHAKPDPGS) are cytoplasmic. Positions 1–47 (MERSPGEGPSPSPTDQPSAPSDPTGQPPAAHAKPDPGSGGQPAGPGA) are disordered. Over residues 15–24 (DQPSAPSDPT) the composition is skewed to polar residues. The span at 37–47 (GSGGQPAGPGA) shows a compositional bias: gly residues. A helical transmembrane segment spans residues 39–59 (GGQPAGPGAAGEALAVLTSFG). Residues 60-62 (KRL) are Lumenal-facing. A helical membrane pass occupies residues 63 to 83 (LVLIPVYLAGAVGLSVGFVLF). The Cytoplasmic portion of the chain corresponds to 84–1104 (GLALYLGWRR…LMDDKDKGSS (1021 aa)). A coiled-coil region spans residues 91–116 (WRRVRDEKERSLRAARQLLDDEEQLT). The 179-residue stretch at 135–313 (DVEKAEWLNK…LPNRLLVPLV (179 aa)) folds into the SMP-LTD domain. C2 domains follow at residues 312 to 433 (LVPD…DDWF), 460 to 580 (QVLQ…QLSS), 627 to 751 (SVDA…DEWL), and 777 to 899 (LEEV…TLNS). Residue serine 324 is modified to Phosphoserine; by CDK5. Positions 344, 345, 357, 404, 406, 408, 410, and 411 each coordinate Ca(2+). Disordered regions lie at residues 617 to 641 (VDSE…TPDS), 813 to 833 (RKGT…TSHK), and 924 to 950 (SHSY…VTSS). Lysine 817 bears the N6-acetyllysine mark. Phosphoserine occurs at positions 820 and 941. Positions 925 to 946 (HSYSHSSSSLSEEPELSGGPPH) are enriched in low complexity. Threonine 948 bears the Phosphothreonine mark. Serine 949 and serine 963 each carry phosphoserine. In terms of domain architecture, C2 5 spans 971–1093 (PLGQVKLTVW…DLSQGVARWY (123 aa)). Residue tyrosine 1009 is modified to Phosphotyrosine. The interval 1018-1025 (KNRGTKRK) is required for phosphatidylinositol 4,5-bisphosphate-dependent location at the cell membrane. Residue serine 1034 is modified to Phosphoserine.

It belongs to the extended synaptotagmin family. In terms of assembly, interacts with ESYT2 and ESYT3. Interacts with ADGRD1; inhibiting the G-protein-coupled receptor activity of ADGRD1. Interaction with ADGRD1 is abolished when cytosolic calcium increases, relieving ADGRD1 G-protein-coupled receptor activity. Interacts (phosphorylated form) with SLC2A4. Phosphorylated on Ser residues in insulin-treated adipocytes (in vitro); this promotes interaction with SLC2A4.

It is found in the endoplasmic reticulum membrane. It localises to the cell membrane. Its function is as follows. Binds calcium (via the C2 domains) and translocates to sites of contact between the endoplasmic reticulum and the cell membrane in response to increased cytosolic calcium levels. Helps tether the endoplasmic reticulum to the cell membrane and promotes the formation of appositions between the endoplasmic reticulum and the cell membrane. Acts as an inhibitor of ADGRD1 G-protein-coupled receptor activity in absence of cytosolic calcium. Binds glycerophospholipids in a barrel-like domain and may play a role in cellular lipid transport. The sequence is that of Extended synaptotagmin-1 (ESYT1) from Pongo abelii (Sumatran orangutan).